Consider the following 124-residue polypeptide: 5-hydroxyisourate hydrolase (124 aa).

Residues His15, Arg53, and Tyr121 each contribute to the substrate site.

The protein belongs to the transthyretin family. 5-hydroxyisourate hydrolase subfamily. In terms of assembly, homotetramer.

The enzyme catalyses 5-hydroxyisourate + H2O = 5-hydroxy-2-oxo-4-ureido-2,5-dihydro-1H-imidazole-5-carboxylate + H(+). In terms of biological role, catalyzes the hydrolysis of 5-hydroxyisourate (HIU) to 2-oxo-4-hydroxy-4-carboxy-5-ureidoimidazoline (OHCU). The polypeptide is 5-hydroxyisourate hydrolase (Mesorhizobium japonicum (strain LMG 29417 / CECT 9101 / MAFF 303099) (Mesorhizobium loti (strain MAFF 303099))).